The sequence spans 196 residues: Rac-like GTP-binding protein RAC9 (196 aa).

A GTP-binding site is contributed by 13–20 (GDGAVGKT). The short motif at 35–43 (YVPTVFDNF) is the Effector region element. GTP-binding positions include 60–64 (DTAGQ) and 118–121 (TKLD). Position 193 is a cysteine methyl ester (Cys193). Cys193 is lipidated: S-geranylgeranyl cysteine. A propeptide spans 194-196 (AFL) (removed in mature form).

The protein belongs to the small GTPase superfamily. Rho family.

It is found in the cytoplasm. The protein localises to the membrane. Its function is as follows. Inactive GDP-bound Rho GTPases reside in the cytosol, are found in a complex with Rho GDP-dissociation inhibitors (Rho GDIs), and are released from the GDI protein in order to translocate to membranes upon activation. The protein is Rac-like GTP-binding protein RAC9 (RAC9) of Gossypium hirsutum (Upland cotton).